The sequence spans 249 residues: Tetrahydromethanopterin S-methyltransferase subunit A (249 aa).

Topologically, residues 2–225 (PEKAEPAEGW…YMAGYLSGRT (224 aa)) are cytoplasmic. Residue His88 participates in 5-hydroxybenzimidazolylcob(I)amide binding. The chain crosses the membrane as a helical span at residues 226-246 (MGLLIGIISGMIFLFLPMVVL). At 247–249 (GGV) the chain is on the extracellular side.

This sequence belongs to the MtrA family. As to quaternary structure, the complex is composed of 8 subunits; MtrA, MtrB, MtrC, MtrD, MtrE, MtrF, MtrG and MtrH. The cofactor is 5-hydroxybenzimidazolylcob(I)amide.

Its subcellular location is the cell membrane. The catalysed reaction is 5-methyl-5,6,7,8-tetrahydromethanopterin + coenzyme M + 2 Na(+)(in) = 5,6,7,8-tetrahydromethanopterin + methyl-coenzyme M + 2 Na(+)(out). The protein operates within one-carbon metabolism; methanogenesis from CO(2); methyl-coenzyme M from 5,10-methylene-5,6,7,8-tetrahydromethanopterin: step 2/2. Part of a complex that catalyzes the formation of methyl-coenzyme M and tetrahydromethanopterin from coenzyme M and methyl-tetrahydromethanopterin. This is an energy-conserving, sodium-ion translocating step. The polypeptide is Tetrahydromethanopterin S-methyltransferase subunit A (Methanopyrus kandleri (strain AV19 / DSM 6324 / JCM 9639 / NBRC 100938)).